The primary structure comprises 176 residues: uncharacterized protein (176 aa).

The interval 71 to 176 (RDDMSSDSDG…YSTDDDEDDY (106 aa)) is disordered. Composition is skewed to low complexity over residues 77–87 (DSDGPAASPPG) and 100–109 (SYSSSDSSAR). Residues 140-152 (KARRPARKKKRIG) are compositionally biased toward basic residues.

This is an uncharacterized protein from Orgyia pseudotsugata multicapsid polyhedrosis virus (OpMNPV).